We begin with the raw amino-acid sequence, 379 residues long: Succinyl-diaminopimelate desuccinylase (379 aa).

Zn(2+) is bound at residue H68. D70 is a catalytic residue. D101 contacts Zn(2+). E135 acts as the Proton acceptor in catalysis. Residues E136, E164, and H350 each contribute to the Zn(2+) site.

Belongs to the peptidase M20A family. DapE subfamily. Homodimer. Requires Zn(2+) as cofactor. Co(2+) is required as a cofactor.

It carries out the reaction N-succinyl-(2S,6S)-2,6-diaminopimelate + H2O = (2S,6S)-2,6-diaminopimelate + succinate. The protein operates within amino-acid biosynthesis; L-lysine biosynthesis via DAP pathway; LL-2,6-diaminopimelate from (S)-tetrahydrodipicolinate (succinylase route): step 3/3. In terms of biological role, catalyzes the hydrolysis of N-succinyl-L,L-diaminopimelic acid (SDAP), forming succinate and LL-2,6-diaminopimelate (DAP), an intermediate involved in the bacterial biosynthesis of lysine and meso-diaminopimelic acid, an essential component of bacterial cell walls. The protein is Succinyl-diaminopimelate desuccinylase of Bordetella pertussis (strain Tohama I / ATCC BAA-589 / NCTC 13251).